A 196-amino-acid chain; its full sequence is Holliday junction branch migration complex subunit RuvA (196 aa).

The domain I stretch occupies residues 1–61; the sequence is MYEYFEGIVT…DTGITLYGFQ (61 aa). The domain II stretch occupies residues 62-140; the sequence is SEDDKGLFLK…DYVARLDRQD (79 aa). Positions 141-149 are flexible linker; that stretch reads EEQGNISPA. Residues 149 to 196 form a domain III region; sequence ALNDALLALIALGYTQKEVDRITTKLEEVNADTADQYIKKGLALLLKK.

This sequence belongs to the RuvA family. As to quaternary structure, homotetramer. Forms an RuvA(8)-RuvB(12)-Holliday junction (HJ) complex. HJ DNA is sandwiched between 2 RuvA tetramers; dsDNA enters through RuvA and exits via RuvB. An RuvB hexamer assembles on each DNA strand where it exits the tetramer. Each RuvB hexamer is contacted by two RuvA subunits (via domain III) on 2 adjacent RuvB subunits; this complex drives branch migration. In the full resolvosome a probable DNA-RuvA(4)-RuvB(12)-RuvC(2) complex forms which resolves the HJ.

The protein resides in the cytoplasm. Functionally, the RuvA-RuvB-RuvC complex processes Holliday junction (HJ) DNA during genetic recombination and DNA repair, while the RuvA-RuvB complex plays an important role in the rescue of blocked DNA replication forks via replication fork reversal (RFR). RuvA specifically binds to HJ cruciform DNA, conferring on it an open structure. The RuvB hexamer acts as an ATP-dependent pump, pulling dsDNA into and through the RuvAB complex. HJ branch migration allows RuvC to scan DNA until it finds its consensus sequence, where it cleaves and resolves the cruciform DNA. In Lactobacillus helveticus (strain DPC 4571), this protein is Holliday junction branch migration complex subunit RuvA.